Reading from the N-terminus, the 337-residue chain is Protein-glutamate methylesterase/protein-glutamine glutaminase of group 3 operon (337 aa).

Residues 2 to 119 (KIAIVNDMPL…GDAREAAAPL (118 aa)) form the Response regulatory domain. A 4-aspartylphosphate modification is found at aspartate 53. The 194-residue stretch at 144 to 337 (PLREASQRRG…AGRLTEFFAK (194 aa)) folds into the CheB-type methylesterase domain. Catalysis depends on residues serine 160, histidine 187, and aspartate 280.

The protein belongs to the CheB family. Phosphorylated by CheA. Phosphorylation of the N-terminal regulatory domain activates the methylesterase activity.

The protein resides in the cytoplasm. The catalysed reaction is [protein]-L-glutamate 5-O-methyl ester + H2O = L-glutamyl-[protein] + methanol + H(+). It catalyses the reaction L-glutaminyl-[protein] + H2O = L-glutamyl-[protein] + NH4(+). Functionally, involved in chemotaxis. Part of a chemotaxis signal transduction system that modulates chemotaxis in response to various stimuli. Catalyzes the demethylation of specific methylglutamate residues introduced into the chemoreceptors (methyl-accepting chemotaxis proteins or MCP) by CheR. Also mediates the irreversible deamidation of specific glutamine residues to glutamic acid. This Pseudomonas putida (strain ATCC 47054 / DSM 6125 / CFBP 8728 / NCIMB 11950 / KT2440) protein is Protein-glutamate methylesterase/protein-glutamine glutaminase of group 3 operon.